The chain runs to 348 residues: Dihydroorotate dehydrogenase (quinone) (348 aa).

Residues 65–69 (AGMDK) and T89 contribute to the FMN site. Position 69 (K69) interacts with substrate. 114-118 (NRMGF) contributes to the substrate binding site. The FMN site is built by N143 and N176. A substrate-binding site is contributed by N176. Catalysis depends on S179, which acts as the Nucleophile. A substrate-binding site is contributed by N181. Residues K221 and T249 each coordinate FMN. 250 to 251 (NT) serves as a coordination point for substrate. FMN contacts are provided by residues G272, G301, and 322 to 323 (YT).

It belongs to the dihydroorotate dehydrogenase family. Type 2 subfamily. As to quaternary structure, monomer. The cofactor is FMN.

Its subcellular location is the cell membrane. The catalysed reaction is (S)-dihydroorotate + a quinone = orotate + a quinol. The protein operates within pyrimidine metabolism; UMP biosynthesis via de novo pathway; orotate from (S)-dihydroorotate (quinone route): step 1/1. In terms of biological role, catalyzes the conversion of dihydroorotate to orotate with quinone as electron acceptor. The protein is Dihydroorotate dehydrogenase (quinone) of Akkermansia muciniphila (strain ATCC BAA-835 / DSM 22959 / JCM 33894 / BCRC 81048 / CCUG 64013 / CIP 107961 / Muc).